Reading from the N-terminus, the 449-residue chain is Hyaluronidase (449 aa).

The N-terminal stretch at Met1–Val23 is a signal peptide. 2 cysteine pairs are disulfide-bonded: Cys47-Cys340 and Cys211-Cys227. Asn67, Asn103, and Asn111 each carry an N-linked (GlcNAc...) asparagine glycan. Glu135 functions as the Proton donor in the catalytic mechanism. A glycan (N-linked (GlcNAc...) asparagine) is linked at Asn153. A glycan (N-linked (GlcNAc...) asparagine) is linked at Asn357. 3 cysteine pairs are disulfide-bonded: Cys365–Cys376, Cys370–Cys427, and Cys429–Cys438. An N-linked (GlcNAc...) asparagine glycan is attached at Asn401. The EGF-like domain occupies Cys427–Cys438.

It belongs to the glycosyl hydrolase 56 family. As to quaternary structure, monomer. As to expression, expressed by the venom gland.

It localises to the secreted. It catalyses the reaction Random hydrolysis of (1-&gt;4)-linkages between N-acetyl-beta-D-glucosamine and D-glucuronate residues in hyaluronate.. Snake venom endo-hyaluronidase that degrades hyaluronan to smaller oligosaccharide fragments. In venom, it is not toxic by itself, but increases the diffusion of other venom proteins by degrading the extracellular matrix. In addition, it displays antiedematogenic activity. This chain is Hyaluronidase, found in Echis pyramidum leakeyi (Leakey's carpet viper).